The chain runs to 91 residues: UPF0250 protein mma_3250 (91 aa).

This sequence belongs to the UPF0250 family.

In Janthinobacterium sp. (strain Marseille) (Minibacterium massiliensis), this protein is UPF0250 protein mma_3250.